The chain runs to 642 residues: Nocturnin (642 aa).

The disordered stretch occupies residues 50–87; the sequence is LEDDDKPPQLFSVTDEPPSPNEEDYKPPNHHEDDGKLA. Positions 72 to 87 are enriched in basic and acidic residues; the sequence is EDYKPPNHHEDDGKLA. Glutamate 363 serves as a coordination point for Mg(2+). Residues glutamate 363, asparagine 430, 453-456, 491-493, and histidine 600 contribute to the substrate site; these read HLKA and DFN. Residues 611–642 form a disordered region; the sequence is PPTENGKESGSGSGSDGENETEVEGSKHGSIQ.

This sequence belongs to the CCR4/nocturin family. In terms of assembly, associates to the CCR4-NOT complex composed of at least Pop2/Caf1-55, Ccr4, Not1, Rga/Not2, and Not3. Requires Mg(2+) as cofactor. In terms of tissue distribution, expressed in the head, in the dorsal neurons DN3, a subgroup of clock neurons (at protein level). Ubiquitously expressed in both males and females.

It localises to the cytoplasm. It carries out the reaction NADP(+) + H2O = phosphate + NAD(+). It catalyses the reaction NADPH + H2O = phosphate + NADH. Functionally, phosphatase which catalyzes the conversion of NADP(+) to NAD(+) and of NADPH to NADH. Shows a small preference for NADPH over NADP(+). Because of its association with the CCR4-NOT complex, has a role in mRNA deadenylation and decay. Required at the pupal stage for proper wing morphogenesis after eclosion. Doesn't have a role in light-mediated behavioral response. Its function is as follows. In dorsal neurons, contributes to the light-mediated behavioral response. This is Nocturnin from Drosophila melanogaster (Fruit fly).